Consider the following 184-residue polypeptide: Photosystem I assembly protein Ycf4 (184 aa).

The next 2 membrane-spanning stretches (helical) occupy residues 22–42 (VCWA…GTSS) and 57–77 (IIFF…LFIS).

It belongs to the Ycf4 family.

It is found in the plastid. It localises to the chloroplast thylakoid membrane. Functionally, seems to be required for the assembly of the photosystem I complex. The sequence is that of Photosystem I assembly protein Ycf4 from Morus indica (Mulberry).